The sequence spans 717 residues: Photosystem I P700 chlorophyll a apoprotein A1 (717 aa).

8 consecutive transmembrane segments (helical) span residues 59–82 (VFRA…FHGA), 145–168 (LYCT…FHYH), 184–208 (LNHH…HVSL), 280–298 (TAHH…GHMY), 335–358 (WHAQ…HHMY), 374–400 (LSLF…IFMV), 422–444 (AIVS…LYIH), and 520–538 (FLVH…LILL). The [4Fe-4S] cluster site is built by C562 and C571. The next 2 helical transmembrane spans lie at 578–599 (HVFL…HFSW) and 653–675 (LSAY…MFLF). H664 contacts chlorophyll a'. Residues M672 and Y680 each coordinate chlorophyll a. W681 contributes to the phylloquinone binding site. The helical transmembrane segment at 713 to 717 (AVGVA) threads the bilayer.

It belongs to the PsaA/PsaB family. As to quaternary structure, the PsaA/B heterodimer binds the P700 chlorophyll special pair and subsequent electron acceptors. PSI consists of a core antenna complex that captures photons, and an electron transfer chain that converts photonic excitation into a charge separation. The eukaryotic PSI reaction center is composed of at least 11 subunits. The cofactor is P700 is a chlorophyll a/chlorophyll a' dimer, A0 is one or more chlorophyll a, A1 is one or both phylloquinones and FX is a shared 4Fe-4S iron-sulfur center..

It localises to the plastid. Its subcellular location is the chloroplast thylakoid membrane. It carries out the reaction reduced [plastocyanin] + hnu + oxidized [2Fe-2S]-[ferredoxin] = oxidized [plastocyanin] + reduced [2Fe-2S]-[ferredoxin]. Functionally, psaA and PsaB bind P700, the primary electron donor of photosystem I (PSI), as well as the electron acceptors A0, A1 and FX. PSI is a plastocyanin-ferredoxin oxidoreductase, converting photonic excitation into a charge separation, which transfers an electron from the donor P700 chlorophyll pair to the spectroscopically characterized acceptors A0, A1, FX, FA and FB in turn. Oxidized P700 is reduced on the lumenal side of the thylakoid membrane by plastocyanin. The sequence is that of Photosystem I P700 chlorophyll a apoprotein A1 from Cycas revoluta (Sago palm).